The chain runs to 90 residues: Small ribosomal subunit protein uS17 (90 aa).

Belongs to the universal ribosomal protein uS17 family. As to quaternary structure, part of the 30S ribosomal subunit.

One of the primary rRNA binding proteins, it binds specifically to the 5'-end of 16S ribosomal RNA. The polypeptide is Small ribosomal subunit protein uS17 (Cutibacterium acnes (strain DSM 16379 / KPA171202) (Propionibacterium acnes)).